The primary structure comprises 265 residues: Aliphatic sulfonates import ATP-binding protein SsuB 1 (265 aa).

Residues 31-255 form the ABC transporter domain; sequence FAFKGVEKRF…RRGSAELARL (225 aa). 63–70 serves as a coordination point for ATP; it reads GKSGCGKS.

Belongs to the ABC transporter superfamily. Aliphatic sulfonates importer (TC 3.A.1.17.2) family. The complex is composed of two ATP-binding proteins (SsuB), two transmembrane proteins (SsuC) and a solute-binding protein (SsuA).

It localises to the cell inner membrane. The enzyme catalyses ATP + H2O + aliphatic sulfonate-[sulfonate-binding protein]Side 1 = ADP + phosphate + aliphatic sulfonateSide 2 + [sulfonate-binding protein]Side 1.. Part of the ABC transporter complex SsuABC involved in aliphatic sulfonates import. Responsible for energy coupling to the transport system. The polypeptide is Aliphatic sulfonates import ATP-binding protein SsuB 1 (Mesorhizobium japonicum (strain LMG 29417 / CECT 9101 / MAFF 303099) (Mesorhizobium loti (strain MAFF 303099))).